A 125-amino-acid polypeptide reads, in one-letter code: Glucose-1-phosphate adenylyltransferase small subunit (125 aa).

This sequence belongs to the bacterial/plant glucose-1-phosphate adenylyltransferase family. Heterotetramer. As to expression, leaves.

Its subcellular location is the plastid. It localises to the chloroplast. The protein localises to the amyloplast. It catalyses the reaction alpha-D-glucose 1-phosphate + ATP + H(+) = ADP-alpha-D-glucose + diphosphate. It functions in the pathway glycan biosynthesis; starch biosynthesis. Its activity is regulated as follows. Activated by 3'phosphoglycerate, inhibited by orthophosphate. Allosteric regulation. Its function is as follows. This protein plays a role in synthesis of starch. It catalyzes the synthesis of the activated glycosyl donor, ADP-glucose from Glc-1-P and ATP. The sequence is that of Glucose-1-phosphate adenylyltransferase small subunit (GLG1) from Zea mays (Maize).